The sequence spans 701 residues: Polyribonucleotide nucleotidyltransferase (701 aa).

2 residues coordinate Mg(2+): D490 and D496. The 60-residue stretch at 557–616 folds into the KH domain; it reads PKVETMTIKPEKIRDVIGPGGKKINEIIDETGVKLDIEQDGTIFIGAVDQDMINRAREII. The S1 motif domain maps to 626-694; that stretch reads GQVYNAKVRR…DKGRVNASHR (69 aa).

This sequence belongs to the polyribonucleotide nucleotidyltransferase family. Mg(2+) is required as a cofactor.

It localises to the cytoplasm. It catalyses the reaction RNA(n+1) + phosphate = RNA(n) + a ribonucleoside 5'-diphosphate. Its function is as follows. Involved in mRNA degradation. Catalyzes the phosphorolysis of single-stranded polyribonucleotides processively in the 3'- to 5'-direction. This Staphylococcus carnosus (strain TM300) protein is Polyribonucleotide nucleotidyltransferase.